Here is a 201-residue protein sequence, read N- to C-terminus: Large ribosomal subunit protein uL4 (201 aa).

Positions 46–71 are disordered; the sequence is QKTRAEVIGSGKKPWRQKGTGRARAG.

It belongs to the universal ribosomal protein uL4 family. In terms of assembly, part of the 50S ribosomal subunit.

Its function is as follows. One of the primary rRNA binding proteins, this protein initially binds near the 5'-end of the 23S rRNA. It is important during the early stages of 50S assembly. It makes multiple contacts with different domains of the 23S rRNA in the assembled 50S subunit and ribosome. Forms part of the polypeptide exit tunnel. This is Large ribosomal subunit protein uL4 from Shewanella sediminis (strain HAW-EB3).